Here is a 483-residue protein sequence, read N- to C-terminus: 6-phosphogluconate dehydrogenase, decarboxylating (483 aa).

NADP(+) is bound by residues 10–15 (GLAVMG) and 33–35 (NRT). K38 is modified (N6-acetyllysine). Phosphoserine is present on S57. K59 is subject to N6-acetyllysine. NADP(+) contacts are provided by residues 75–77 (VKA) and N103. Substrate contacts are provided by residues N103 and 129–131 (SGG). Position 129 is a phosphoserine (S129). K184 acts as the Proton acceptor in catalysis. 187-188 (HN) is a binding site for substrate. Catalysis depends on E191, which acts as the Proton donor. Substrate-binding residues include Y192, K261, R288, R447, and H453. Residue 478-481 (SSSY) participates in NADP(+) binding.

This sequence belongs to the 6-phosphogluconate dehydrogenase family. As to quaternary structure, homodimer.

The protein resides in the cytoplasm. It carries out the reaction 6-phospho-D-gluconate + NADP(+) = D-ribulose 5-phosphate + CO2 + NADPH. The protein operates within carbohydrate degradation; pentose phosphate pathway; D-ribulose 5-phosphate from D-glucose 6-phosphate (oxidative stage): step 3/3. Catalyzes the oxidative decarboxylation of 6-phosphogluconate to ribulose 5-phosphate and CO(2), with concomitant reduction of NADP to NADPH. This Rattus norvegicus (Rat) protein is 6-phosphogluconate dehydrogenase, decarboxylating.